The following is a 603-amino-acid chain: NADH-ubiquinone oxidoreductase chain 5 (603 aa).

The next 15 membrane-spanning stretches (helical) occupy residues 38–58 (SIVA…MCLD), 87–107 (MMFI…SLWY), 122–142 (LIFL…QLFI), 144–160 (WEGV…WWYA), 171–191 (AILY…WFIL), 211–233 (TPLL…HPWL), 241–261 (TPVS…FLLI), 272–292 (LIQT…AVCA), 301–320 (IVAF…IGIN), 325–347 (AFLH…GSII), 370–390 (STSL…TGFY), 407–429 (WALS…MILL), 458–478 (AAGS…ASPF), 482–502 (IPLY…LTAL), and 582–602 (GMIK…LLLI).

Belongs to the complex I subunit 5 family. As to quaternary structure, core subunit of respiratory chain NADH dehydrogenase (Complex I) which is composed of 45 different subunits.

It localises to the mitochondrion inner membrane. It catalyses the reaction a ubiquinone + NADH + 5 H(+)(in) = a ubiquinol + NAD(+) + 4 H(+)(out). Core subunit of the mitochondrial membrane respiratory chain NADH dehydrogenase (Complex I) which catalyzes electron transfer from NADH through the respiratory chain, using ubiquinone as an electron acceptor. Essential for the catalytic activity and assembly of complex I. The protein is NADH-ubiquinone oxidoreductase chain 5 (MT-ND5) of Homo sapiens (Human).